The primary structure comprises 698 residues: Glycine--tRNA ligase beta subunit (698 aa).

The protein belongs to the class-II aminoacyl-tRNA synthetase family. As to quaternary structure, tetramer of two alpha and two beta subunits.

It is found in the cytoplasm. It carries out the reaction tRNA(Gly) + glycine + ATP = glycyl-tRNA(Gly) + AMP + diphosphate. This Xanthomonas campestris pv. campestris (strain B100) protein is Glycine--tRNA ligase beta subunit.